A 427-amino-acid chain; its full sequence is Adenylosuccinate synthetase (427 aa).

GTP is bound by residues 12–18 (GDEGKGK) and 40–42 (GHT). The Proton acceptor role is filled by aspartate 13. Residues aspartate 13 and glycine 40 each coordinate Mg(2+). Residues 13-16 (DEGK), 38-41 (NAGH), threonine 128, arginine 142, glutamine 223, threonine 238, and arginine 302 each bind IMP. Catalysis depends on histidine 41, which acts as the Proton donor. 298–304 (TTTGRPR) serves as a coordination point for substrate. Residues arginine 304, 330–332 (LLD), and 412–414 (SVG) contribute to the GTP site.

This sequence belongs to the adenylosuccinate synthetase family. In terms of assembly, homodimer. It depends on Mg(2+) as a cofactor.

The protein localises to the cytoplasm. It carries out the reaction IMP + L-aspartate + GTP = N(6)-(1,2-dicarboxyethyl)-AMP + GDP + phosphate + 2 H(+). It functions in the pathway purine metabolism; AMP biosynthesis via de novo pathway; AMP from IMP: step 1/2. Its function is as follows. Plays an important role in the de novo pathway of purine nucleotide biosynthesis. Catalyzes the first committed step in the biosynthesis of AMP from IMP. The protein is Adenylosuccinate synthetase of Alkaliphilus metalliredigens (strain QYMF).